A 172-amino-acid chain; its full sequence is WW domain binding protein VOPP1 (172 aa).

A signal peptide spans 1–22; that stretch reads MARPLGRVAALLLGLLMECTEA. Residues 23–60 lie on the Extracellular side of the membrane; the sequence is KKHCWYFEGLYPTYYICRSYEDCCGSRCCVRALSIQRL. A helical transmembrane segment spans residues 61–81; the sequence is WYFWFLLMMGVLFCCGAGFFI. The Cytoplasmic segment spans residues 82-172; that stretch reads RRRMYPPPLI…PPYEQVVKDK (91 aa). Residues 139–172 form a disordered region; it reads QVQPNSPHGGTTYPPPPSYCNTPPPPYEQVVKDK. Residues 151-165 show a composition bias toward pro residues; sequence YPPPPSYCNTPPPPY.

Belongs to the VOPP1/ECOP family. As to quaternary structure, interacts with WWOX (via WW domain).

Its subcellular location is the cytoplasmic vesicle membrane. It is found in the late endosome membrane. The protein resides in the lysosome membrane. Functionally, increases the transcriptional activity of NFKB1 by facilitating its nuclear translocation, DNA-binding and associated apoptotic response, when overexpressed. May sequester WWOX in lysosomal vesicles and thereby regulate WWOX role as tumor suppressor. The protein is WW domain binding protein VOPP1 of Rattus norvegicus (Rat).